Here is a 231-residue protein sequence, read N- to C-terminus: Uracil-DNA glycosylase (231 aa).

The active-site Proton acceptor is the D71.

It belongs to the uracil-DNA glycosylase (UDG) superfamily. UNG family.

It is found in the cytoplasm. The catalysed reaction is Hydrolyzes single-stranded DNA or mismatched double-stranded DNA and polynucleotides, releasing free uracil.. Excises uracil residues from the DNA which can arise as a result of misincorporation of dUMP residues by DNA polymerase or due to deamination of cytosine. This chain is Uracil-DNA glycosylase, found in Pseudomonas aeruginosa (strain UCBPP-PA14).